Reading from the N-terminus, the 190-residue chain is RNA pyrophosphohydrolase (190 aa).

Positions 6-149 constitute a Nudix hydrolase domain; it reads GYRPNVGIVL…KRGVYARALC (144 aa). Positions 38–59 match the Nudix box motif; it reads GGMHSDETPVEAMYRELNEETG.

The protein belongs to the Nudix hydrolase family. RppH subfamily. The cofactor is a divalent metal cation.

Accelerates the degradation of transcripts by removing pyrophosphate from the 5'-end of triphosphorylated RNA, leading to a more labile monophosphorylated state that can stimulate subsequent ribonuclease cleavage. The polypeptide is RNA pyrophosphohydrolase (Xylella fastidiosa (strain 9a5c)).